Here is a 141-residue protein sequence, read N- to C-terminus: Nucleoside diphosphate kinase (141 aa).

Positions 11, 59, 87, 93, 104, and 114 each coordinate ATP. His-117 acts as the Pros-phosphohistidine intermediate in catalysis.

Belongs to the NDK family. Homotetramer. Mg(2+) is required as a cofactor.

It is found in the cytoplasm. It carries out the reaction a 2'-deoxyribonucleoside 5'-diphosphate + ATP = a 2'-deoxyribonucleoside 5'-triphosphate + ADP. The enzyme catalyses a ribonucleoside 5'-diphosphate + ATP = a ribonucleoside 5'-triphosphate + ADP. In terms of biological role, major role in the synthesis of nucleoside triphosphates other than ATP. The ATP gamma phosphate is transferred to the NDP beta phosphate via a ping-pong mechanism, using a phosphorylated active-site intermediate. In Delftia acidovorans (strain DSM 14801 / SPH-1), this protein is Nucleoside diphosphate kinase.